We begin with the raw amino-acid sequence, 347 residues long: Phenylalanine--tRNA ligase alpha subunit (347 aa).

Glu-261 provides a ligand contact to Mg(2+).

The protein belongs to the class-II aminoacyl-tRNA synthetase family. Phe-tRNA synthetase alpha subunit type 1 subfamily. In terms of assembly, tetramer of two alpha and two beta subunits. Mg(2+) is required as a cofactor.

It is found in the cytoplasm. It catalyses the reaction tRNA(Phe) + L-phenylalanine + ATP = L-phenylalanyl-tRNA(Phe) + AMP + diphosphate + H(+). This is Phenylalanine--tRNA ligase alpha subunit from Streptococcus equi subsp. zooepidemicus (strain MGCS10565).